Here is a 319-residue protein sequence, read N- to C-terminus: Histidinol-phosphate aminotransferase 1 (319 aa).

Lys-182 is modified (N6-(pyridoxal phosphate)lysine).

This sequence belongs to the class-II pyridoxal-phosphate-dependent aminotransferase family. Histidinol-phosphate aminotransferase subfamily. Requires pyridoxal 5'-phosphate as cofactor.

The enzyme catalyses L-histidinol phosphate + 2-oxoglutarate = 3-(imidazol-4-yl)-2-oxopropyl phosphate + L-glutamate. It functions in the pathway amino-acid biosynthesis; L-histidine biosynthesis; L-histidine from 5-phospho-alpha-D-ribose 1-diphosphate: step 7/9. This Archaeoglobus fulgidus (strain ATCC 49558 / DSM 4304 / JCM 9628 / NBRC 100126 / VC-16) protein is Histidinol-phosphate aminotransferase 1 (hisC1).